A 479-amino-acid chain; its full sequence is ATP-dependent protease ATPase subunit HslU (479 aa).

Residues I32, G74–E79, D290, E355, and R427 each bind ATP.

It belongs to the ClpX chaperone family. HslU subfamily. As to quaternary structure, a double ring-shaped homohexamer of HslV is capped on each side by a ring-shaped HslU homohexamer. The assembly of the HslU/HslV complex is dependent on binding of ATP.

The protein resides in the cytoplasm. Its function is as follows. ATPase subunit of a proteasome-like degradation complex; this subunit has chaperone activity. The binding of ATP and its subsequent hydrolysis by HslU are essential for unfolding of protein substrates subsequently hydrolyzed by HslV. HslU recognizes the N-terminal part of its protein substrates and unfolds these before they are guided to HslV for hydrolysis. The protein is ATP-dependent protease ATPase subunit HslU of Leptospira interrogans serogroup Icterohaemorrhagiae serovar copenhageni (strain Fiocruz L1-130).